The sequence spans 240 residues: Aspartate/glutamate leucyltransferase (240 aa).

Belongs to the R-transferase family. Bpt subfamily.

The protein resides in the cytoplasm. It catalyses the reaction N-terminal L-glutamyl-[protein] + L-leucyl-tRNA(Leu) = N-terminal L-leucyl-L-glutamyl-[protein] + tRNA(Leu) + H(+). The enzyme catalyses N-terminal L-aspartyl-[protein] + L-leucyl-tRNA(Leu) = N-terminal L-leucyl-L-aspartyl-[protein] + tRNA(Leu) + H(+). Functions in the N-end rule pathway of protein degradation where it conjugates Leu from its aminoacyl-tRNA to the N-termini of proteins containing an N-terminal aspartate or glutamate. This chain is Aspartate/glutamate leucyltransferase, found in Bordetella avium (strain 197N).